We begin with the raw amino-acid sequence, 338 residues long: Methionyl-tRNA formyltransferase (338 aa).

Position 110-113 (110-113 (SLLP)) interacts with (6S)-5,6,7,8-tetrahydrofolate.

This sequence belongs to the Fmt family.

The catalysed reaction is L-methionyl-tRNA(fMet) + (6R)-10-formyltetrahydrofolate = N-formyl-L-methionyl-tRNA(fMet) + (6S)-5,6,7,8-tetrahydrofolate + H(+). Its function is as follows. Attaches a formyl group to the free amino group of methionyl-tRNA(fMet). The formyl group appears to play a dual role in the initiator identity of N-formylmethionyl-tRNA by promoting its recognition by IF2 and preventing the misappropriation of this tRNA by the elongation apparatus. This Synechococcus sp. (strain CC9605) protein is Methionyl-tRNA formyltransferase.